A 216-amino-acid chain; its full sequence is ATP phosphoribosyltransferase (216 aa).

It belongs to the ATP phosphoribosyltransferase family. Short subfamily. In terms of assembly, heteromultimer composed of HisG and HisZ subunits.

The protein localises to the cytoplasm. The catalysed reaction is 1-(5-phospho-beta-D-ribosyl)-ATP + diphosphate = 5-phospho-alpha-D-ribose 1-diphosphate + ATP. The protein operates within amino-acid biosynthesis; L-histidine biosynthesis; L-histidine from 5-phospho-alpha-D-ribose 1-diphosphate: step 1/9. In terms of biological role, catalyzes the condensation of ATP and 5-phosphoribose 1-diphosphate to form N'-(5'-phosphoribosyl)-ATP (PR-ATP). Has a crucial role in the pathway because the rate of histidine biosynthesis seems to be controlled primarily by regulation of HisG enzymatic activity. This Lachnospira eligens (strain ATCC 27750 / DSM 3376 / VPI C15-48 / C15-B4) (Eubacterium eligens) protein is ATP phosphoribosyltransferase.